We begin with the raw amino-acid sequence, 381 residues long: MKNLLDLSIEELKELVSPSFRATQIYEWVYKKNATEFSQMLNLPKDMRQDLAEKFYLDPLKCVKFEQSSDGSIKYLFELKDGLKIESVLLPMKEEISDEDGKISRHARYTICVSSQVGCKMGCAFCLTAKGGLVRNLTAGEIVGQILWIKRENKIPYERRINVVYMGMGEPLDNLTNVSKAIKILALNEGLAISPRRQTVSTSGLGSQIKKLGEMDLGVLLAISLHAVTNELRSRLMPINKAYNIEAVMDAVRGFPIDMRKRVMFEYLVIKDLNDSVSDAKKLVKLLHGIKAKVNLIYFNPHEGSEFGRPELASMLKFQEYLRDHGVTCTIRQSKGLDISAACGQLKQRNENPKFRANVSGNSAAKTEEKPTNDKTNVSKK.

Glutamate 86 functions as the Proton acceptor in the catalytic mechanism. Residues 105 to 338 (RHARYTICVS…CTIRQSKGLD (234 aa)) form the Radical SAM core domain. Cysteines 112 and 343 form a disulfide. [4Fe-4S] cluster contacts are provided by cysteine 119, cysteine 123, and cysteine 126. S-adenosyl-L-methionine contacts are provided by residues 169-170 (GE), serine 201, 224-226 (SLH), and asparagine 300. Cysteine 343 functions as the S-methylcysteine intermediate in the catalytic mechanism. A disordered region spans residues 351-381 (ENPKFRANVSGNSAAKTEEKPTNDKTNVSKK).

It belongs to the radical SAM superfamily. RlmN family. It depends on [4Fe-4S] cluster as a cofactor.

The protein localises to the cytoplasm. It catalyses the reaction adenosine(2503) in 23S rRNA + 2 reduced [2Fe-2S]-[ferredoxin] + 2 S-adenosyl-L-methionine = 2-methyladenosine(2503) in 23S rRNA + 5'-deoxyadenosine + L-methionine + 2 oxidized [2Fe-2S]-[ferredoxin] + S-adenosyl-L-homocysteine. The enzyme catalyses adenosine(37) in tRNA + 2 reduced [2Fe-2S]-[ferredoxin] + 2 S-adenosyl-L-methionine = 2-methyladenosine(37) in tRNA + 5'-deoxyadenosine + L-methionine + 2 oxidized [2Fe-2S]-[ferredoxin] + S-adenosyl-L-homocysteine. In terms of biological role, specifically methylates position 2 of adenine 2503 in 23S rRNA and position 2 of adenine 37 in tRNAs. m2A2503 modification seems to play a crucial role in the proofreading step occurring at the peptidyl transferase center and thus would serve to optimize ribosomal fidelity. The sequence is that of Dual-specificity RNA methyltransferase RlmN from Campylobacter concisus (strain 13826).